We begin with the raw amino-acid sequence, 276 residues long: Undecaprenyl-diphosphatase (276 aa).

A run of 5 helical transmembrane segments spans residues 85–105, 108–128, 187–207, 217–237, and 253–273; these read MNVVIATVPAVALALLFEKTI, VLFAPVPVAVALVVGGAAILW, VATEFSFFLAIPVIFGATLYE, VDSVGLFAIGLVAAFVSAFAC, and FAWYRIAFGLFVLLVGYSGWI.

This sequence belongs to the UppP family.

Its subcellular location is the cell inner membrane. The catalysed reaction is di-trans,octa-cis-undecaprenyl diphosphate + H2O = di-trans,octa-cis-undecaprenyl phosphate + phosphate + H(+). Functionally, catalyzes the dephosphorylation of undecaprenyl diphosphate (UPP). Confers resistance to bacitracin. The protein is Undecaprenyl-diphosphatase of Burkholderia mallei (strain NCTC 10247).